The sequence spans 289 residues: Acetyl-coenzyme A carboxylase carboxyl transferase subunit beta (289 aa).

Residues 30–289 (IWRECPRCHS…SNAWRANHDK (260 aa)) enclose the CoA carboxyltransferase N-terminal domain. Residues C34, C37, C52, and C55 each coordinate Zn(2+). The C4-type zinc-finger motif lies at 34–55 (CPRCHSRFYYRRFGNFDVCPEC).

It belongs to the AccD/PCCB family. Acetyl-CoA carboxylase is a heterohexamer composed of biotin carboxyl carrier protein (AccB), biotin carboxylase (AccC) and two subunits each of ACCase subunit alpha (AccA) and ACCase subunit beta (AccD). Zn(2+) serves as cofactor.

Its subcellular location is the cytoplasm. The enzyme catalyses N(6)-carboxybiotinyl-L-lysyl-[protein] + acetyl-CoA = N(6)-biotinyl-L-lysyl-[protein] + malonyl-CoA. It participates in lipid metabolism; malonyl-CoA biosynthesis; malonyl-CoA from acetyl-CoA: step 1/1. Its function is as follows. Component of the acetyl coenzyme A carboxylase (ACC) complex. Biotin carboxylase (BC) catalyzes the carboxylation of biotin on its carrier protein (BCCP) and then the CO(2) group is transferred by the transcarboxylase to acetyl-CoA to form malonyl-CoA. The sequence is that of Acetyl-coenzyme A carboxylase carboxyl transferase subunit beta from Oenococcus oeni (strain ATCC BAA-331 / PSU-1).